The primary structure comprises 734 residues: Platelet glycoprotein Ib alpha chain (734 aa).

The first 16 residues, 1 to 16, serve as a signal peptide directing secretion; the sequence is MALLILLFLLPSPLHS. One can recognise an LRRNT domain in the interval 17–47; that stretch reads QHTCSISKVTSLLEVNCENKKLTALPADLPA. The Extracellular portion of the chain corresponds to 17-612; sequence QHTCSISKVT…LNSDFCCFLP (596 aa). Cys20 and Cys33 are joined by a disulfide. LRR repeat units lie at residues 48 to 69, 72 to 93, 94 to 115, 117 to 140, 141 to 162, 165 to 188, and 189 to 210; these read DTGILHLGENQLGTFSTASLVH, HLTYLYLDRCELTSLQTNGKLI, KLENLDLSHNNLKSLPSLGWAL, ALTTLDVSFNKLGSLSPGVLDGLS, QLQELYLQNNDLKSLPPGLLLP, KLKKLNLANNKLRELPSGLLDGLE, and DLDTLYLQRNWLRTIPKGFFGT. The LRRCT domain maps to 221–282; the sequence is NSWYCDCEIL…YSYPGKGCPT (62 aa). 2 disulfide bridges follow: Cys225-Cys264 and Cys227-Cys280. Tyr292 is modified (sulfotyrosine). O-linked (GalNAc...) threonine glycosylation is found at Thr301, Thr311, Thr315, and Thr316. Residue Ser335 is glycosylated (O-linked (GalNAc...) serine). Residues Thr339, Thr348, Thr358, and Thr377 are each glycosylated (O-linked (GalNAc...) threonine). Ser382 carries an O-linked (GalNAc...) serine glycan. 3 O-linked (GalNAc...) threonine glycosylation sites follow: Thr384, Thr385, and Thr405. Disordered regions lie at residues 406-429 and 460-526; these read STLTTPEHSTTPVPTTTILTTPEH and EPST…PEPS. O-linked (GalNAc...) threonine glycans are attached at residues Thr512, Thr516, Thr519, Thr530, Thr542, Thr546, Thr550, and Thr562. Ser572 carries O-linked (GalNAc...) serine glycosylation. Thr573 is a glycosylation site (O-linked (GalNAc...) threonine). A helical membrane pass occupies residues 613–633; the sequence is LGFYVLGLLWLLFASVVLILL. Residues 634–734 are Cytoplasmic-facing; the sequence is LTWTWHVTPH…VGIRYSGHSL (101 aa). Phosphoserine occurs at positions 711 and 714.

In terms of assembly, two GP-Ib beta are disulfide-linked to one GP-Ib alpha. GP-IX is complexed with the GP-Ib heterodimer via a non covalent linkage. Interacts with FLNB. Interacts with FLNA (via filamin repeats 4, 9, 12, 17, 19, 21, and 23). O-glycosylated. Post-translationally, glycocalicin is the product of a proteolytic cleavage/shedding, catalyzed by ADAM17, which releases most of the extracellular domain. Binding sites for vWF and thrombin are in this part of the protein.

The protein resides in the membrane. In terms of biological role, GP-Ib, a surface membrane protein of platelets, participates in the formation of platelet plugs by binding to the A1 domain of vWF, which is already bound to the subendothelium. This chain is Platelet glycoprotein Ib alpha chain (Gp1ba), found in Mus musculus (Mouse).